Here is a 121-residue protein sequence, read N- to C-terminus: Large ribosomal subunit protein bL12 (121 aa).

It belongs to the bacterial ribosomal protein bL12 family. Homodimer. Part of the ribosomal stalk of the 50S ribosomal subunit. Forms a multimeric L10(L12)X complex, where L10 forms an elongated spine to which 2 to 4 L12 dimers bind in a sequential fashion. Binds GTP-bound translation factors.

Its function is as follows. Forms part of the ribosomal stalk which helps the ribosome interact with GTP-bound translation factors. Is thus essential for accurate translation. The chain is Large ribosomal subunit protein bL12 from Clostridium novyi (strain NT).